Consider the following 450-residue polypeptide: MEQDKYLTVAAITKYIEKKFDVDPYMKQVFVRGEISNLKQPASGHLYFTVKDEFAMLRSVMFQKAVQKIGFVPEDGMNVLITGRIGVFTKAGRYQFYAEHMEPDGVGALYIQLEQLKTQLEKEGLFAETHKKVLPSFPSKVAVVTSKTGAAVRDILTTIHRRMPSVEVIVYPTIVQGEKSAQKIVENIGRINQRNDIDVMIIGRGGGSLEELWAFNEEPVVRAVYDSDVPVISAVGHETDFALSDFSADVRAATPTAAAELAVPDYRDLEERLAERKYRLLTVTRQLLERKERTLEQLKQHLILNGPKHQLEQQIERTDYFSERLKNAFSKQVLLKQTMFNRLNDRLHYYHPRKEIELQNEQLAVRKQALEKAMKRQLKDKQQVFVRQIEALEHLSPLALLKRGFGVTYKEGQLVKSVQDLEVGDDIQVKMQGGHIEASITAKEEDTSGN.

Belongs to the XseA family. As to quaternary structure, heterooligomer composed of large and small subunits.

The protein localises to the cytoplasm. The catalysed reaction is Exonucleolytic cleavage in either 5'- to 3'- or 3'- to 5'-direction to yield nucleoside 5'-phosphates.. Functionally, bidirectionally degrades single-stranded DNA into large acid-insoluble oligonucleotides, which are then degraded further into small acid-soluble oligonucleotides. The chain is Exodeoxyribonuclease 7 large subunit from Listeria welshimeri serovar 6b (strain ATCC 35897 / DSM 20650 / CCUG 15529 / CIP 8149 / NCTC 11857 / SLCC 5334 / V8).